Reading from the N-terminus, the 72-residue chain is UPF0154 protein Bcer98_2334 (72 aa).

A helical transmembrane segment spans residues 3–23 (IWSGILVGVVALLAGVALGFF).

Belongs to the UPF0154 family.

It is found in the cell membrane. In Bacillus cytotoxicus (strain DSM 22905 / CIP 110041 / 391-98 / NVH 391-98), this protein is UPF0154 protein Bcer98_2334.